A 291-amino-acid chain; its full sequence is MANSASLLYDQLKVAEPFFLLAGPNVIESEEHVLRMAKSIKDISTKLGLPLVFKSSFDKANRTSSKSFRGPGMAEGLKILEKVKVAFDLPIVTDVHESSQCEAVGKVADIIQIPAFLCRQTDLLVAAAQSGKIINIKKGQFCGHSVMRNSAEKVRLAGNPNVMVCERGTMFGYNDLIVDPRNLEWMREADCPVVADITHSLQQPAGKKLDGGGVASGGLRELIPCIARTAVAVGVDGIFMEVHDDPLNAPVDGPTQWPLRHLEELLEELIAIASVTKGKQQFQIDLTPYRD.

N-acetylalanine is present on Ala-2.

Belongs to the KdsA family. Expressed in roots, apical meristem, emerging leaves, hydathodes of young leaves, styles of mature flowers and funicules of mature siliques.

The protein localises to the cytoplasm. It catalyses the reaction D-arabinose 5-phosphate + phosphoenolpyruvate + H2O = 3-deoxy-alpha-D-manno-2-octulosonate-8-phosphate + phosphate. Its function is as follows. Catalyzes the stereospecific condensation of D-arabinose 5-phosphate and phosphoenolpyruvate to form 3-deoxy-D-manno-octulosonate 8-phosphate (KDO-8-phosphate) and inorganic phosphate. Involved in the biosynthesis of 3-deoxy-D-manno-octulosonate (KDO) which is an indispensable component of rhamnogalacturonan II (RG-II), a structurally complex pectic polysaccharide of the primary cell wall. RG-II is essential for the cell wall integrity of rapidly growing tissues and pollen tube growth and elongation. This Arabidopsis thaliana (Mouse-ear cress) protein is 2-dehydro-3-deoxyphosphooctonate aldolase 2 (KDSA2).